The following is a 557-amino-acid chain: Urocanate hydratase (557 aa).

Residues 53–54 (GG), glutamine 131, 177–179 (GMG), glutamate 197, arginine 202, 243–244 (NA), 264–268 (QTSAH), 274–275 (YL), and tyrosine 323 contribute to the NAD(+) site. Cysteine 411 is a catalytic residue. Glycine 493 contacts NAD(+).

This sequence belongs to the urocanase family. Requires NAD(+) as cofactor.

It localises to the cytoplasm. The enzyme catalyses 4-imidazolone-5-propanoate = trans-urocanate + H2O. It functions in the pathway amino-acid degradation; L-histidine degradation into L-glutamate; N-formimidoyl-L-glutamate from L-histidine: step 2/3. Its function is as follows. Catalyzes the conversion of urocanate to 4-imidazolone-5-propionate. This Pseudomonas entomophila (strain L48) protein is Urocanate hydratase.